The sequence spans 1070 residues: DNA-directed RNA polymerase subunit beta (1070 aa).

Belongs to the RNA polymerase beta chain family. In terms of assembly, in plastids the minimal PEP RNA polymerase catalytic core is composed of four subunits: alpha, beta, beta', and beta''. When a (nuclear-encoded) sigma factor is associated with the core the holoenzyme is formed, which can initiate transcription.

Its subcellular location is the plastid. The protein resides in the chloroplast. The enzyme catalyses RNA(n) + a ribonucleoside 5'-triphosphate = RNA(n+1) + diphosphate. In terms of biological role, DNA-dependent RNA polymerase catalyzes the transcription of DNA into RNA using the four ribonucleoside triphosphates as substrates. This chain is DNA-directed RNA polymerase subunit beta, found in Citrus sinensis (Sweet orange).